Here is a 502-residue protein sequence, read N- to C-terminus: Glycogen synthase (502 aa).

Residue Lys-24 participates in ADP-alpha-D-glucose binding.

It belongs to the glycosyltransferase 1 family. Bacterial/plant glycogen synthase subfamily.

It catalyses the reaction [(1-&gt;4)-alpha-D-glucosyl](n) + ADP-alpha-D-glucose = [(1-&gt;4)-alpha-D-glucosyl](n+1) + ADP + H(+). It functions in the pathway glycan biosynthesis; glycogen biosynthesis. Synthesizes alpha-1,4-glucan chains using ADP-glucose. In Nitrosomonas eutropha (strain DSM 101675 / C91 / Nm57), this protein is Glycogen synthase.